A 723-amino-acid polypeptide reads, in one-letter code: ATP-dependent zinc metalloprotease YME1 homolog (723 aa).

Residues 198-220 form a helical membrane-spanning segment; that stretch reads LTRFYIFLVFCIFFGYLTGRIRV. Residue 288 to 295 participates in ATP binding; it reads GPPGTGKT. Zn(2+) is bound at residue histidine 509. The active site involves glutamate 510. The Zn(2+) site is built by histidine 513 and aspartate 587.

This sequence in the N-terminal section; belongs to the AAA ATPase family. The protein in the C-terminal section; belongs to the peptidase M41 family. Zn(2+) serves as cofactor.

It localises to the mitochondrion inner membrane. It is found in the mitochondrion. ATP-dependent metalloprotease that catalyzes the degradation of folded and unfolded proteins with a suitable degron sequence in the mitochondrial intermembrane region. Plays an important role in regulating mitochondrial morphology and function. This Caenorhabditis elegans protein is ATP-dependent zinc metalloprotease YME1 homolog (ymel-1).